We begin with the raw amino-acid sequence, 387 residues long: Succinate--CoA ligase [ADP-forming] subunit beta (387 aa).

The 228-residue stretch at K9–K236 folds into the ATP-grasp domain. ATP-binding positions include K45, G52–G54, S94, and E99. Mg(2+) contacts are provided by N191 and D205. Substrate-binding positions include N256 and G318 to T320.

This sequence belongs to the succinate/malate CoA ligase beta subunit family. In terms of assembly, heterotetramer of two alpha and two beta subunits. The cofactor is Mg(2+).

The enzyme catalyses succinate + ATP + CoA = succinyl-CoA + ADP + phosphate. It catalyses the reaction GTP + succinate + CoA = succinyl-CoA + GDP + phosphate. Its pathway is carbohydrate metabolism; tricarboxylic acid cycle; succinate from succinyl-CoA (ligase route): step 1/1. Functionally, succinyl-CoA synthetase functions in the citric acid cycle (TCA), coupling the hydrolysis of succinyl-CoA to the synthesis of either ATP or GTP and thus represents the only step of substrate-level phosphorylation in the TCA. The beta subunit provides nucleotide specificity of the enzyme and binds the substrate succinate, while the binding sites for coenzyme A and phosphate are found in the alpha subunit. The sequence is that of Succinate--CoA ligase [ADP-forming] subunit beta from Mycobacterium bovis (strain ATCC BAA-935 / AF2122/97).